A 102-amino-acid chain; its full sequence is NADH-quinone oxidoreductase subunit K (102 aa).

3 helical membrane passes run 6-26 (MEHG…GLMV), 30-50 (ILFV…AFVV), and 62-82 (IMFI…LAIL).

It belongs to the complex I subunit 4L family. NDH-1 is composed of 13 different subunits. Subunits NuoA, H, J, K, L, M, N constitute the membrane sector of the complex.

It localises to the cell inner membrane. The enzyme catalyses a quinone + NADH + 5 H(+)(in) = a quinol + NAD(+) + 4 H(+)(out). Functionally, NDH-1 shuttles electrons from NADH, via FMN and iron-sulfur (Fe-S) centers, to quinones in the respiratory chain. The immediate electron acceptor for the enzyme in this species is believed to be ubiquinone. Couples the redox reaction to proton translocation (for every two electrons transferred, four hydrogen ions are translocated across the cytoplasmic membrane), and thus conserves the redox energy in a proton gradient. This Azotobacter vinelandii (strain DJ / ATCC BAA-1303) protein is NADH-quinone oxidoreductase subunit K.